Here is a 471-residue protein sequence, read N- to C-terminus: Alpha-galactosidase 5 (471 aa).

An N-terminal signal peptide occupies residues 1 to 18 (MFAFYFLTACTTLKGVFG). An intrachain disulfide couples Cys-42 to Cys-74. Asp-72 and Asp-73 together coordinate substrate. Asn-105 is a glycosylation site (N-linked (GlcNAc...) asparagine). An intrachain disulfide couples Cys-121 to Cys-151. Substrate is bound at residue Lys-147. The active-site Nucleophile is the Asp-149. N-linked (GlcNAc...) asparagine glycosylation is present at Asn-175. Position 205 (Arg-205) interacts with substrate. The active-site Proton donor is the Asp-209. 2 disulfides stabilise this stretch: Cys-221/Cys-237 and Cys-223/Cys-230. Residue Gln-251 participates in substrate binding. N-linked (GlcNAc...) asparagine glycosylation is found at Asn-270, Asn-370, Asn-403, Asn-422, Asn-435, and Asn-454.

The protein belongs to the glycosyl hydrolase 27 family. In terms of assembly, homotetramer.

Its subcellular location is the secreted. The catalysed reaction is Hydrolysis of terminal, non-reducing alpha-D-galactose residues in alpha-D-galactosides, including galactose oligosaccharides, galactomannans and galactolipids.. This chain is Alpha-galactosidase 5 (MEL5), found in Saccharomyces cerevisiae (Baker's yeast).